Consider the following 248-residue polypeptide: Coproheme decarboxylase (248 aa).

Residues Arg130, 144-148 (YPMDK), His171, Gln184, and Ser222 contribute to the Fe-coproporphyrin III site. Tyr144 is a catalytic residue.

It belongs to the ChdC family. Type 1 subfamily. As to quaternary structure, homopentamer. Fe-coproporphyrin III serves as cofactor.

The enzyme catalyses Fe-coproporphyrin III + 2 H2O2 + 2 H(+) = heme b + 2 CO2 + 4 H2O. The catalysed reaction is Fe-coproporphyrin III + H2O2 + H(+) = harderoheme III + CO2 + 2 H2O. It catalyses the reaction harderoheme III + H2O2 + H(+) = heme b + CO2 + 2 H2O. It participates in porphyrin-containing compound metabolism; protoheme biosynthesis. Its function is as follows. Involved in coproporphyrin-dependent heme b biosynthesis. Catalyzes the decarboxylation of Fe-coproporphyrin III (coproheme) to heme b (protoheme IX), the last step of the pathway. The reaction occurs in a stepwise manner with a three-propionate intermediate. This is Coproheme decarboxylase from Geobacillus kaustophilus (strain HTA426).